The primary structure comprises 484 residues: Cobyric acid synthase (484 aa).

The region spanning 248 to 435 is the GATase cobBQ-type domain; sequence VLKVIVPVLP…LHGLFEGSQS (188 aa). The active-site Nucleophile is the C329. The active site involves H427.

The protein belongs to the CobB/CobQ family. CobQ subfamily.

Its pathway is cofactor biosynthesis; adenosylcobalamin biosynthesis. Functionally, catalyzes amidations at positions B, D, E, and G on adenosylcobyrinic A,C-diamide. NH(2) groups are provided by glutamine, and one molecule of ATP is hydrogenolyzed for each amidation. This is Cobyric acid synthase from Pseudomonas putida (strain GB-1).